A 194-amino-acid chain; its full sequence is MEERVLNVELRTKTGKGISRQLRRNNFIPGVVYGKGMESVPVSLSTKELSTAIAGEGGRNHLLTLKGGGGLDGQMVIVAELLQDCLKGTPRHVDLHKINMADKVRVKVPVNLVGSAVGVKEGGLLDFAMHEIEIECFPTHIPEHIDVDVTELTIGHSLHIGDIKELPGIKVLGDATVSVVSILGKVKEEPVVDA.

This sequence belongs to the bacterial ribosomal protein bL25 family. CTC subfamily. Part of the 50S ribosomal subunit; part of the 5S rRNA/L5/L18/L25 subcomplex. Contacts the 5S rRNA. Binds to the 5S rRNA independently of L5 and L18.

In terms of biological role, this is one of the proteins that binds to the 5S RNA in the ribosome where it forms part of the central protuberance. This is Large ribosomal subunit protein bL25 from Geotalea uraniireducens (strain Rf4) (Geobacter uraniireducens).